Here is a 359-residue protein sequence, read N- to C-terminus: Phosphate acyltransferase (359 aa).

Positions 335–359 (SGAGGAATGSPETDAPNPHPDSRAA) are disordered.

This sequence belongs to the PlsX family. In terms of assembly, homodimer. Probably interacts with PlsY.

The protein localises to the cytoplasm. The enzyme catalyses a fatty acyl-[ACP] + phosphate = an acyl phosphate + holo-[ACP]. It functions in the pathway lipid metabolism; phospholipid metabolism. Its function is as follows. Catalyzes the reversible formation of acyl-phosphate (acyl-PO(4)) from acyl-[acyl-carrier-protein] (acyl-ACP). This enzyme utilizes acyl-ACP as fatty acyl donor, but not acyl-CoA. The protein is Phosphate acyltransferase of Cupriavidus metallidurans (strain ATCC 43123 / DSM 2839 / NBRC 102507 / CH34) (Ralstonia metallidurans).